A 635-amino-acid polypeptide reads, in one-letter code: Leucine aminopeptidase 2-2 (635 aa).

Residues 141–143 (QCQ) and 265–270 (PYGGME) each bind substrate. His-294 is a Zn(2+) binding site. The active-site Proton acceptor is Glu-295. Zn(2+) contacts are provided by His-298 and Glu-317. Residue Tyr-399 is the Proton donor of the active site.

This sequence belongs to the peptidase M1 family. Zn(2+) serves as cofactor.

Its subcellular location is the cytoplasm. The protein resides in the nucleus. It carries out the reaction an epoxide + H2O = an ethanediol. Functionally, aminopeptidase that preferentially cleaves di- and tripeptides. Also has low epoxide hydrolase activity (in vitro). Can hydrolyze the epoxide leukotriene LTA(4) but it forms preferentially 5,6-dihydroxy-7,9,11,14-eicosatetraenoic acid rather than the cytokine leukotriene B(4) as the product compared to the homologous mammalian enzyme (in vitro). The protein is Leucine aminopeptidase 2-2 (LTA4) of Scheffersomyces stipitis (strain ATCC 58785 / CBS 6054 / NBRC 10063 / NRRL Y-11545) (Yeast).